A 247-amino-acid chain; its full sequence is 14-3-3 protein gamma (247 aa).

This sequence belongs to the 14-3-3 family. Homodimer, and heterodimer with other family members.

Its subcellular location is the cytoplasm. Its function is as follows. Adapter protein implicated in the regulation of a large spectrum of both general and specialized signaling pathways. Binds to a large number of partners, usually by recognition of a phosphoserine or phosphothreonine motif. Binding generally results in the modulation of the activity of the binding partner. In Gallus gallus (Chicken), this protein is 14-3-3 protein gamma (YWHAG).